We begin with the raw amino-acid sequence, 226 residues long: Chalcone--flavanone isomerase (226 aa).

The substrate site is built by T47, N112, and S189.

It belongs to the chalcone isomerase family.

It catalyses the reaction a chalcone = a flavanone.. Its pathway is secondary metabolite biosynthesis; flavonoid biosynthesis. Functionally, catalyzes the intramolecular cyclization of bicyclic chalcones into tricyclic (S)-flavanones. Responsible for the isomerization of 4,2',4',6'-tetrahydroxychalcone (also termed chalcone) into naringenin. In Allium cepa (Onion), this protein is Chalcone--flavanone isomerase (CHI).